The primary structure comprises 559 residues: Tissue-type plasminogen activator (559 aa).

The signal sequence occupies residues 1–17; that stretch reads MKRELLCVLLLCGLAFP. Positions 18–29 are excised as a propeptide; sequence LPDQGIHGRFRR. The propeptide at 30–32 is removed by plasmin; that stretch reads GAR. The Fibronectin type-I domain maps to 36-78; it reads ATCRDEPTQTTYQQHQSWLRPMLRSSRVEYCRCNSGLVQCHSV. Intrachain disulfides connect Cys38–Cys68, Cys66–Cys75, Cys83–Cys94, Cys88–Cys105, Cys107–Cys116, Cys124–Cys205, Cys145–Cys187, Cys176–Cys200, Cys213–Cys294, Cys234–Cys276, Cys265–Cys289, Cys297–Cys428, Cys340–Cys356, Cys348–Cys417, Cys442–Cys516, Cys474–Cys490, and Cys506–Cys534. The segment at 39 to 49 is important for binding to annexin A2; sequence RDEPTQTTYQQ. Residues 79–117 form the EGF-like domain; it reads PVRSCSEPRCFNGGTCQQALYFSDFVCQCPDGFVGKRCD. Kringle domains follow at residues 124 to 205 and 213 to 294; these read CFEE…TPAC and CYVG…MSPC. A glycan (N-linked (GlcNAc...) asparagine) is linked at Asn149. One can recognise a Peptidase S1 domain in the interval 309-558; sequence IKGGLYTDIT…YLDWIHDNMK (250 aa). Active-site charge relay system residues include His355 and Asp404. N-linked (GlcNAc...) asparagine glycosylation is present at Asn481. Ser510 serves as the catalytic Charge relay system.

The protein belongs to the peptidase S1 family. In terms of assembly, heterodimer of chain A and chain B held by a disulfide bond. Binds to fibrin with high affinity. This interaction leads to an increase in the catalytic efficiency of the enzyme due to an increase in affinity for plasminogen. Similarly, binding to heparin increases the activation of plasminogen. Binds to annexin A2, cytokeratin-8, fibronectin and laminin. Binds to mannose receptor and the low-density lipoprotein receptor-related protein (LRP1); these proteins are involved in TPA clearance. Binds LRP1B; binding is followed by internalization and degradation. Forms heterodimer with SERPINA5. Interacts with SERPINE1. In complex with SERPINE1, interacts with SORL1. In terms of processing, the single chain, almost fully active enzyme, can be further processed into a two-chain fully active form by a cleavage after Arg-308 catalyzed by plasmin, tissue kallikrein or factor Xa.

It is found in the secreted. The protein resides in the extracellular space. It catalyses the reaction Specific cleavage of Arg-|-Val bond in plasminogen to form plasmin.. Its activity is regulated as follows. Inhibited by SERPINA5. Inhibited by SERPINE1. In terms of biological role, converts the abundant, but inactive, zymogen plasminogen to plasmin by hydrolyzing a single Arg-Val bond in plasminogen. By controlling plasmin-mediated proteolysis, it plays an important role in tissue remodeling and degradation, in cell migration and many other physiopathological events. During oocyte activation, plays a role in cortical granule reaction in the zona reaction, which contributes to the block to polyspermy. The chain is Tissue-type plasminogen activator (Plat) from Mus musculus (Mouse).